The following is a 1234-amino-acid chain: ATP-dependent helicase/nuclease subunit A (1234 aa).

In terms of domain architecture, UvrD-like helicase ATP-binding spans 9 to 482 (STWTDDQWEA…IDLNKNFRSR (474 aa)). Position 30–37 (30–37 (AAAGSGKT)) interacts with ATP. Residues 509–800 (QAELKLGASY…RMMTIHSSKG (292 aa)) form the UvrD-like helicase C-terminal domain.

It belongs to the helicase family. AddA subfamily. Heterodimer of AddA and AddB/RexB. It depends on Mg(2+) as a cofactor.

The catalysed reaction is Couples ATP hydrolysis with the unwinding of duplex DNA by translocating in the 3'-5' direction.. It catalyses the reaction ATP + H2O = ADP + phosphate + H(+). Functionally, the heterodimer acts as both an ATP-dependent DNA helicase and an ATP-dependent, dual-direction single-stranded exonuclease. Recognizes the chi site generating a DNA molecule suitable for the initiation of homologous recombination. The AddA nuclease domain is required for chi fragment generation; this subunit has the helicase and 3' -&gt; 5' nuclease activities. This chain is ATP-dependent helicase/nuclease subunit A, found in Bacillus pumilus (strain SAFR-032).